The following is a 216-amino-acid chain: Adenylate kinase (216 aa).

10–15 contributes to the ATP binding site; the sequence is GAGKGT. The NMP stretch occupies residues 30–59; the sequence is STGDIFRANIKEKTPLGIEAKRYIDNGQLV. AMP is bound by residues T31, R36, 57–59, 85–88, and Q92; these read QLV and GFPR. Residues 126–163 are LID; the sequence is GRRVCTSCGASYHIRFNPPKIEGKCDICDNELIQRKDD. R127 is an ATP binding site. Zn(2+) is bound by residues C130 and C133. 136–137 provides a ligand contact to ATP; it reads SY. Zn(2+) is bound by residues C150 and C153. Residues R160 and R171 each coordinate AMP. Residue E199 coordinates ATP.

This sequence belongs to the adenylate kinase family. Monomer.

Its subcellular location is the cytoplasm. It carries out the reaction AMP + ATP = 2 ADP. The protein operates within purine metabolism; AMP biosynthesis via salvage pathway; AMP from ADP: step 1/1. Its function is as follows. Catalyzes the reversible transfer of the terminal phosphate group between ATP and AMP. Plays an important role in cellular energy homeostasis and in adenine nucleotide metabolism. The polypeptide is Adenylate kinase (Clostridium botulinum (strain ATCC 19397 / Type A)).